The sequence spans 189 residues: MLKTMIKNELEAHQKTFSEHVNLLGSLELACQMVADTLKNGKKVLICGNGGSAADAQHFAAELTGRYKSERQPLPGIALTTDTSALTAIGNDYGFDYVFSRQFEALAQSGDLLVAISTSGNSKNVLEAIKSAKKMGVSVLGLSGKGGGAMNEGCDLNLVVGSSDTARIQESHIFFIHTICQAVDEAFRG.

Residues 34–189 (VADTLKNGKK…CQAVDEAFRG (156 aa)) form the SIS domain. 49–51 (NGG) serves as a coordination point for substrate. Zn(2+) is bound by residues His58 and Glu62. Substrate is bound by residues Glu62, 91-92 (ND), 117-119 (STS), Ser122, and Gln169. 2 residues coordinate Zn(2+): Gln169 and His177.

The protein belongs to the SIS family. GmhA subfamily. Homotetramer. Zn(2+) is required as a cofactor.

The protein resides in the cytoplasm. The enzyme catalyses 2 D-sedoheptulose 7-phosphate = D-glycero-alpha-D-manno-heptose 7-phosphate + D-glycero-beta-D-manno-heptose 7-phosphate. It functions in the pathway carbohydrate biosynthesis; D-glycero-D-manno-heptose 7-phosphate biosynthesis; D-glycero-alpha-D-manno-heptose 7-phosphate and D-glycero-beta-D-manno-heptose 7-phosphate from sedoheptulose 7-phosphate: step 1/1. Its function is as follows. Catalyzes the isomerization of sedoheptulose 7-phosphate in D-glycero-D-manno-heptose 7-phosphate. The sequence is that of Phosphoheptose isomerase from Campylobacter concisus (strain 13826).